Consider the following 431-residue polypeptide: Interleukin-11 receptor subunit alpha (431 aa).

Positions 1-23 (MSSSRSGLTRVLVAVATALVSSS) are cleaved as a signal peptide. At 24-371 (TPCPQAWGPP…DPLEQVAVLA (348 aa)) the chain is on the extracellular side. The Ig-like C2-type domain occupies 27 to 110 (PQAWGPPGVQ…FGGMVTLKLG (84 aa)). Disulfide bonds link Cys48/Cys94, Cys120/Cys130, and Cys170/Cys180. Fibronectin type-III domains lie at 112 to 219 (PPAR…LRPD) and 220 to 317 (PPQG…TPST). Asn127 is a glycosylation site (N-linked (GlcNAc...) asparagine). A disordered region spans residues 151-170 (KTLPGAESQRESPSTGPWPC). The N-linked (GlcNAc...) asparagine glycan is linked to Asn194. Residues 304–308 (WSAWS) carry the WSXWS motif motif. Positions 310–360 (EAWGTPSTGPLRDEVPDGSRGHEQKLEAAAQEDSPAPPSPSLQPDPRPLDH) are disordered. Residues 320–335 (LRDEVPDGSRGHEQKL) are compositionally biased toward basic and acidic residues. Over residues 344 to 355 (PAPPSPSLQPDP) the composition is skewed to pro residues. A helical transmembrane segment spans residues 372-392 (SLGIFSFLGLAVGALALGLWL). At 393–431 (RLRRSGKDGPQKPGFLAPMIPGDKLPGIPNLQRTPENFS) the chain is on the cytoplasmic side. The segment at 402-431 (PQKPGFLAPMIPGDKLPGIPNLQRTPENFS) is disordered.

This sequence belongs to the type I cytokine receptor family. Type 3 subfamily. As to quaternary structure, on IL11 binding, forms a multimer complex with IL6ST/gp130. A short soluble form is also released from the membrane by proteolysis. The sIL11RA is formed either by limited proteolysis of membrane-bound receptors, a process referred to as ectodomain shedding, or directly secreted from the cells after alternative mRNA splicing. mIL11RA is cleaved by the proteases ADAM10, ELANE and PRTN3.

It localises to the membrane. Its subcellular location is the secreted. Receptor for interleukin-11 (IL11). The receptor systems for IL6, LIF, OSM, CNTF, IL11 and CT1 can utilize IL6ST for initiating signal transmission. The IL11/IL11RA/IL6ST complex may be involved in the control of proliferation and/or differentiation of skeletogenic progenitor or other mesenchymal cells. Essential for the normal development of craniofacial bones and teeth. Restricts suture fusion and tooth number. Its function is as follows. Soluble form of IL11 receptor (sIL11RA) that acts as an agonist of IL11 activity. The IL11:sIL11RA complex binds to IL6ST/gp130 on cell surfaces and induces signaling also on cells that do not express membrane-bound IL11RA in a process called IL11 trans-signaling. The chain is Interleukin-11 receptor subunit alpha from Rattus norvegicus (Rat).